Consider the following 461-residue polypeptide: Cysteine--tRNA ligase (461 aa).

Cys28 lines the Zn(2+) pocket. The short motif at 30-40 is the 'HIGH' region element; it reads ITIYDLCHIGH. Cys209, His234, and Glu238 together coordinate Zn(2+). A 'KMSKS' region motif is present at residues 266–270; that stretch reads KMSKS. Lys269 lines the ATP pocket.

This sequence belongs to the class-I aminoacyl-tRNA synthetase family. As to quaternary structure, monomer. Requires Zn(2+) as cofactor.

It is found in the cytoplasm. It catalyses the reaction tRNA(Cys) + L-cysteine + ATP = L-cysteinyl-tRNA(Cys) + AMP + diphosphate. The sequence is that of Cysteine--tRNA ligase from Yersinia pseudotuberculosis serotype O:3 (strain YPIII).